Consider the following 882-residue polypeptide: DNA mismatch repair protein MutS (882 aa).

640–647 (GPNMGGKS) contributes to the ATP binding site.

Belongs to the DNA mismatch repair MutS family.

This protein is involved in the repair of mismatches in DNA. It is possible that it carries out the mismatch recognition step. This protein has a weak ATPase activity. The chain is DNA mismatch repair protein MutS from Albidiferax ferrireducens (strain ATCC BAA-621 / DSM 15236 / T118) (Rhodoferax ferrireducens).